We begin with the raw amino-acid sequence, 380 residues long: MAEAMVVEDRPAEAKRFFCHMCNVEINIPNSDFTCPLCANGFVEELPANAPEMDSSTAGASGSARSGSSGSGSSGSHDTLSRGSSSSGSQVNVESLRNDIVSLLNMRNVPNLEITIEPNRRHSNVLHLGGFGGPSGSDSARGLTAGGRVRPANLDRLDNVLFDFLQSLPLAGATAEIVTGPGGGGVGGGGNSHMFFMGNPGDYAWGREGLDTIVTQMLNQMETSGPPPLSAQRINEIPNVQINAEEVNRKIQCSICWDDFKIDETVRKLPCSHLYHENCIVPWLNLHSTCPICRKSLADDGNDADDEFVMLDAFGPEMAADGSNSERRSASTATGTDNPSPANNPSQAAAEGGRTRPDANPAQAARNNIFTFDDDNMFLD.

The interval A50–N92 is disordered. 2 stretches are compositionally biased toward low complexity: residues S55–S68 and S74–S89. Residues C253–R294 form an RING-type; atypical zinc finger. Positions E317 to N367 are disordered. The segment covering N338–A350 has biased composition (low complexity).

Interacts (via N-terminus) with CG7546 (via Ubl domain).

The enzyme catalyses S-ubiquitinyl-[E2 ubiquitin-conjugating enzyme]-L-cysteine + [acceptor protein]-L-lysine = [E2 ubiquitin-conjugating enzyme]-L-cysteine + N(6)-ubiquitinyl-[acceptor protein]-L-lysine.. The protein operates within protein modification; protein ubiquitination. In terms of biological role, E3 ubiquitin-protein ligase that mediates E2-dependent, 'Lys-48'- and/or 'Lys-63'-linked polyubiquitination of substrates. Recognizes miRNA-empty Ago1 and triggers its degradation via polyubiquitination independently of the Bag6 complex. By targeting miRNA-empty Ago1, eliminates dysfunctional Ago1 not able to bind miRNA and thereby plays a role in the quality control of miRNA-mediated silencing. This is E3 ubiquitin-protein ligase Iruka from Drosophila melanogaster (Fruit fly).